The following is a 102-amino-acid chain: Small ribosomal subunit protein uS10 (102 aa).

This sequence belongs to the universal ribosomal protein uS10 family. In terms of assembly, part of the 30S ribosomal subunit.

Its function is as follows. Involved in the binding of tRNA to the ribosomes. The polypeptide is Small ribosomal subunit protein uS10 (Opitutus terrae (strain DSM 11246 / JCM 15787 / PB90-1)).